We begin with the raw amino-acid sequence, 470 residues long: FAD-dependent monooxygenase SAT7 (470 aa).

A helical transmembrane segment spans residues 28–48 (GLSVAIVGGGIVGIALALGLV). FAD-binding residues include E58, A71, and R143. Active-site residues include R227 and Y260. D351 and A364 together coordinate FAD.

It belongs to the paxM FAD-dependent monooxygenase family. FAD serves as cofactor.

It localises to the membrane. It functions in the pathway mycotoxin biosynthesis. In terms of biological role, FAD-dependent monooxygenase; part of the satratoxin SC1 cluster involved in the biosynthesis of satratoxins, trichothecene mycotoxins that are associated with human food poisonings. Satratoxins are suggested to be made by products of multiple gene clusters (SC1, SC2 and SC3) that encode 21 proteins in all, including polyketide synthases, acetyltransferases, and other enzymes expected to modify the trichothecene skeleton. SC1 encodes 10 proteins, SAT1 to SAT10. The largest are SAT8, which encodes a putative polyketide synthase (PKS) with a conventional non-reducing architecture, and SAT10, a putative protein containing four ankyrin repeats and thus may be involved in protein scaffolding. The putative short-chain reductase SAT3 may assist the PKS in some capacity. SAT6 contains a secretory lipase domain and acts probably as a trichothecene esterase. SAT5 encodes a putative acetyltransferase, and so, with SAT6, may affect endogenous protection from toxicity. The probable transcription factor SAT9 may regulate the expression of the SC1 cluster. SC2 encodes proteins SAT11 to SAT16, the largest of which encodes the putative reducing PKS SAT13. SAT11 is a cytochrome P450 monooxygenase, while SAT14 and SAT16 are probable acetyltransferases. The SC2 cluster may be regulated by the transcription factor SAT15. SC3 is a small cluster that encodes 5 proteins, SAT17 to SAT21. SAT21 is a putative MFS-type transporter which may have a role in exporting secondary metabolites. The four other proteins putatively encoded in SC3 include the taurine hydroxylase-like protein SAT17, the O-methyltransferase SAT18, the acetyltransferase SAT19, and the Cys6-type zinc finger SAT20, the latter being probably involved in regulation of SC3 expression. This Stachybotrys chartarum (strain CBS 109288 / IBT 7711) (Toxic black mold) protein is FAD-dependent monooxygenase SAT7.